The sequence spans 1033 residues: Calcium-transporting ATPase 12, plasma membrane-type (1033 aa).

Position 1 is an N-acetylmethionine (M1). Over 1 to 152 (MRDLKEYDYS…NTYHKPPPKG (152 aa)) the chain is Cytoplasmic. Residues 25–36 (QRRWRFAYAAIY) are interaction with calmodulin. Residue S37 is modified to Phosphoserine. Residues 153–173 (LLFFVYEAFKDLTILILLVCA) form a helical membrane-spanning segment. Residues 174 to 191 (IFSLGFGIKEHGIKEGWY) are Lumenal-facing. A helical transmembrane segment spans residues 192 to 212 (EGGSIFVAVFLVIVVSALSNF). At 213–341 (RQERQFDKLS…SERTPLQVRL (129 aa)) the chain is on the cytoplasmic side. A helical transmembrane segment spans residues 342–361 (DTLTSTIGKIGLTVAALVLV). Residues 362 to 397 (VLLVRYFTGNTEKEGKREYNGSKTPVDTVVNSVVRI) lie on the Lumenal side of the membrane. Residues 398–415 (VAAAVTIVVVAIPEGLPL) traverse the membrane as a helical segment. Residues 416 to 806 (AVTLTLAYSM…KWGRCVYNNI (391 aa)) are Cytoplasmic-facing. The active-site 4-aspartylphosphate intermediate is D453. D751 and D755 together coordinate Mg(2+). Residues 807–825 (QKFIQFQLTVNVAALVINF) traverse the membrane as a helical segment. Over 826-836 (IAAISAGEVPL) the chain is Lumenal. Residues 837–857 (TAVQLLWVNLIMDTLGALALA) traverse the membrane as a helical segment. Over 858 to 877 (TERPTNELLKRKPVGRTEAL) the chain is Cytoplasmic. The helical transmembrane segment at 878–900 (ITNVMWRNLLVQSLYQIAVLLIL) threads the bilayer. Residues 901–909 (QFKGMSIFS) are Lumenal-facing. A helical transmembrane segment spans residues 910 to 930 (VRKEVKDTLIFNTFVLCQVFN). The Cytoplasmic segment spans residues 931–948 (EFNAREMEKKNVFKGLHR). The helical transmembrane segment at 949–970 (NRLFIGIIAITIVLQVIMVEFL) threads the bilayer. The Lumenal segment spans residues 971–980 (KKFADTVRLN). A helical transmembrane segment spans residues 981 to 1002 (GWQWGTCIALASLSWPIGFFTK). Topologically, residues 1003 to 1006 (FIPV) are cytoplasmic.

This sequence belongs to the cation transport ATPase (P-type) (TC 3.A.3) family. Type IIB subfamily.

It localises to the membrane. The catalysed reaction is Ca(2+)(in) + ATP + H2O = Ca(2+)(out) + ADP + phosphate + H(+). Its activity is regulated as follows. Activated by calmodulin. In terms of biological role, this magnesium-dependent enzyme catalyzes the hydrolysis of ATP coupled with the translocation of calcium from the cytosol out of the cell or into organelles. The polypeptide is Calcium-transporting ATPase 12, plasma membrane-type (ACA12) (Arabidopsis thaliana (Mouse-ear cress)).